A 340-amino-acid chain; its full sequence is Ketol-acid reductoisomerase (NADP(+)) (340 aa).

The KARI N-terminal Rossmann domain occupies 3–182 (VQMEYEKDVK…GAARVGLLET (180 aa)). Residues 26-29 (YGSQ), R49, S53, and 83-86 (DEIQ) contribute to the NADP(+) site. H108 is an active-site residue. G134 contacts NADP(+). The KARI C-terminal knotted domain maps to 183–328 (TYKEETEEDL…AELRKAMPFV (146 aa)). Positions 191, 195, 227, and 231 each coordinate Mg(2+). S252 contributes to the substrate binding site.

The protein belongs to the ketol-acid reductoisomerase family. Mg(2+) serves as cofactor.

It catalyses the reaction (2R)-2,3-dihydroxy-3-methylbutanoate + NADP(+) = (2S)-2-acetolactate + NADPH + H(+). The enzyme catalyses (2R,3R)-2,3-dihydroxy-3-methylpentanoate + NADP(+) = (S)-2-ethyl-2-hydroxy-3-oxobutanoate + NADPH + H(+). Its pathway is amino-acid biosynthesis; L-isoleucine biosynthesis; L-isoleucine from 2-oxobutanoate: step 2/4. It functions in the pathway amino-acid biosynthesis; L-valine biosynthesis; L-valine from pyruvate: step 2/4. In terms of biological role, involved in the biosynthesis of branched-chain amino acids (BCAA). Catalyzes an alkyl-migration followed by a ketol-acid reduction of (S)-2-acetolactate (S2AL) to yield (R)-2,3-dihydroxy-isovalerate. In the isomerase reaction, S2AL is rearranged via a Mg-dependent methyl migration to produce 3-hydroxy-3-methyl-2-ketobutyrate (HMKB). In the reductase reaction, this 2-ketoacid undergoes a metal-dependent reduction by NADPH to yield (R)-2,3-dihydroxy-isovalerate. This is Ketol-acid reductoisomerase (NADP(+)) from Streptococcus pneumoniae (strain Hungary19A-6).